The primary structure comprises 452 residues: Exodeoxyribonuclease 7 large subunit (452 aa).

It belongs to the XseA family. In terms of assembly, heterooligomer composed of large and small subunits.

The protein resides in the cytoplasm. The enzyme catalyses Exonucleolytic cleavage in either 5'- to 3'- or 3'- to 5'-direction to yield nucleoside 5'-phosphates.. Its function is as follows. Bidirectionally degrades single-stranded DNA into large acid-insoluble oligonucleotides, which are then degraded further into small acid-soluble oligonucleotides. The polypeptide is Exodeoxyribonuclease 7 large subunit (Bordetella avium (strain 197N)).